A 527-amino-acid chain; its full sequence is Estrogen receptor beta (527 aa).

Residues 1–145 are modulating; that stretch reads MDVKNSPSSL…SPSSKRDAHF (145 aa). Phosphoserine; by MAPK occurs at positions 84 and 102. 2 NR C4-type zinc fingers span residues 146 to 166 and 182 to 206; these read CAVC…CEGC and CPAT…LRKC. Residues 146-211 constitute a DNA-binding region (nuclear receptor); sequence CAVCSDYASG…RLRKCYEVGM (66 aa). The NR LBD domain occupies 261 to 495; that stretch reads SPEQLVLTLL…DLLLEMLNAH (235 aa). The interval 505 to 527 is disordered; the sequence is TRSERNLAEDSESKEGSQKPQAQ. Residues 506–521 show a composition bias toward basic and acidic residues; it reads RSERNLAEDSESKEGS.

Belongs to the nuclear hormone receptor family. NR3 subfamily. In terms of assembly, binds DNA as a homodimer. Can form a heterodimer with ESR1. Interacts with NCOA1, NCOA3, NCOA5 and NCOA6 coactivators, leading to a strong increase of transcription of target genes. Interacts with UBE1C and AKAP13. Interacts with DNTTIP2. Interacts with CCDC62 in the presence of estradiol/E2; this interaction seems to enhance the transcription of target genes. Interacts with DNAAF4. Interacts with PRMT2. Interacts with CCAR2 (via N-terminus) in a ligand-independent manner. Interacts with RBM39, in the presence of estradiol (E2). Interacts with STUB1/CHIP. Phosphorylation at Ser-84 and Ser-102 recruits NCOA1.

The protein resides in the nucleus. Nuclear hormone receptor. Binds estrogens with an affinity similar to that of ESR1/ER-alpha, and activates expression of reporter genes containing estrogen response elements (ERE) in an estrogen-dependent manner. This chain is Estrogen receptor beta (ESR2), found in Ovis aries (Sheep).